Here is a 1201-residue protein sequence, read N- to C-terminus: Protein dduB (1201 aa).

Residues 1–22 form the signal peptide; it reads MKFIKYLLILFLILKINYFVES. Residues 23–1180 lie on the Extracellular side of the membrane; sequence GVDCQKNTEY…QDPSDELSTS (1158 aa). N-linked (GlcNAc...) asparagine glycans are attached at residues N68, N122, N150, N185, N283, N348, N360, N437, N448, N518, N535, N554, N585, N631, N759, N815, N830, N844, N946, N1042, N1058, N1098, and N1108. Residues 1181–1201 traverse the membrane as a helical segment; it reads SFIQLNILSLLLISIFTIFIL.

Its subcellular location is the membrane. This chain is Protein dduB (dduB), found in Dictyostelium discoideum (Social amoeba).